The primary structure comprises 85 residues: Small ribosomal subunit protein bS18 (85 aa).

It belongs to the bacterial ribosomal protein bS18 family. As to quaternary structure, part of the 30S ribosomal subunit. Forms a tight heterodimer with protein bS6.

Its function is as follows. Binds as a heterodimer with protein bS6 to the central domain of the 16S rRNA, where it helps stabilize the platform of the 30S subunit. This chain is Small ribosomal subunit protein bS18, found in Helicobacter pylori (strain P12).